The following is a 129-amino-acid chain: MKEVIDTVGRRKTSVARAFMIPGKGRVIVNKLPIEEYFKDEFKRQQALRPLVITERAEEFDIKINVQGGGVSGQSGAVSLAIARALTEFDETARVILKTEKLLTRDPRMVERKKFGRKKARKRFQFSKR.

It belongs to the universal ribosomal protein uS9 family.

The protein is Small ribosomal subunit protein uS9 of Pelodictyon phaeoclathratiforme (strain DSM 5477 / BU-1).